Here is a 665-residue protein sequence, read N- to C-terminus: tRNA 5-methylaminomethyl-2-thiouridine biosynthesis bifunctional protein MnmC (665 aa).

Residues 1–243 (MSQTSLHHAR…KREMLAGERA (243 aa)) are tRNA (mnm(5)s(2)U34)-methyltransferase. Residues 268–665 (IGGGIASAMT…RKLLKGKPLQ (398 aa)) are FAD-dependent cmnm(5)s(2)U34 oxidoreductase.

The protein in the N-terminal section; belongs to the methyltransferase superfamily. tRNA (mnm(5)s(2)U34)-methyltransferase family. This sequence in the C-terminal section; belongs to the DAO family. FAD is required as a cofactor.

The protein localises to the cytoplasm. It catalyses the reaction 5-aminomethyl-2-thiouridine(34) in tRNA + S-adenosyl-L-methionine = 5-methylaminomethyl-2-thiouridine(34) in tRNA + S-adenosyl-L-homocysteine + H(+). Its function is as follows. Catalyzes the last two steps in the biosynthesis of 5-methylaminomethyl-2-thiouridine (mnm(5)s(2)U) at the wobble position (U34) in tRNA. Catalyzes the FAD-dependent demodification of cmnm(5)s(2)U34 to nm(5)s(2)U34, followed by the transfer of a methyl group from S-adenosyl-L-methionine to nm(5)s(2)U34, to form mnm(5)s(2)U34. The sequence is that of tRNA 5-methylaminomethyl-2-thiouridine biosynthesis bifunctional protein MnmC from Aeromonas hydrophila subsp. hydrophila (strain ATCC 7966 / DSM 30187 / BCRC 13018 / CCUG 14551 / JCM 1027 / KCTC 2358 / NCIMB 9240 / NCTC 8049).